A 161-amino-acid polypeptide reads, in one-letter code: Arachidonate 5-lipoxygenase-activating protein (161 aa).

At 1 to 8 (MDQETVGN) the chain is on the lumenal side. Residues 9–30 (VVLLAIVTLISVVQNGFFAHKV) form a helical membrane-spanning segment. Residues 31 to 52 (EHESRTQNGRSFQRTGTLAFER) lie on the Cytoplasmic side of the membrane. A helical transmembrane segment spans residues 53–77 (VYTANQNCVDAYPTFLAVLWSAGLL). Residues 78-80 (CSQ) are Lumenal-facing. A helical membrane pass occupies residues 81 to 102 (VPAAFAGLMYLFVRQKYFVGYL). Residues 103–107 (GERTQ) are Cytoplasmic-facing. An intramembrane segment occupies 108-115 (STPGYIFG). Residues 116-128 (KRIILFLFLMSVA) traverse the membrane as a helical segment. Topologically, residues 129-161 (GIFNYYLIFFFGSDFENYIKTISTTISPLLLIP) are lumenal.

Belongs to the MAPEG family. In terms of assembly, homotrimer. Interacts with LTC4S and ALOX5.

Its subcellular location is the nucleus membrane. The protein resides in the endoplasmic reticulum membrane. Functionally, required for leukotriene biosynthesis by ALOX5 (5-lipoxygenase). Anchors ALOX5 to the membrane. Binds arachidonic acid, and could play an essential role in the transfer of arachidonic acid to ALOX5. Binds to MK-886, a compound that blocks the biosynthesis of leukotrienes. This Homo sapiens (Human) protein is Arachidonate 5-lipoxygenase-activating protein (ALOX5AP).